The chain runs to 1006 residues: E3 ubiquitin-protein ligase MIB1 (1006 aa).

One can recognise an MIB/HERC2 1 domain in the interval 6–74 (NNRVMVEGVG…AYDLRILDSA (69 aa)). Residues 80–132 (HDGTMCDTCRQQPIIGIRWKCAECTNYDLCTVCYHGDKHHLRHRFYRITTPGS) form a ZZ-type zinc finger. Residues Cys-85, Cys-88, Cys-100, Cys-103, Cys-109, Cys-112, His-118, and His-122 each coordinate Zn(2+). Positions 143–221 (SKKITARGIF…MSDLKCVQDA (79 aa)) constitute an MIB/HERC2 2 domain. At Ser-408 the chain carries Phosphoserine. 9 ANK repeats span residues 430–460 (DLNE…DVNG), 463–492 (AGHT…DVEA), 496–525 (DGDR…DLNA), 529–558 (RRQT…HPSL), 562–591 (EGDT…DVTI), 595–627 (NGFN…IVDE), 631–661 (DGYT…NLDI), 665–694 (NQQT…KLDI), and 698–729 (DGDT…KVDA). RING-type zinc fingers lie at residues 819 to 854 (CMVC…LICK) and 866 to 901 (CVVC…VQCR). The stretch at 935-962 (QKDKDNTNVNADVQKLQQQLQDIKEQTM) forms a coiled coil. The RING-type 3 zinc finger occupies 963-996 (CPVCLDRLKNMIFLCGHGTCQLCGDRMSECPICR).

Interacts with CEP131 and PCM1. In terms of processing, ubiquitinated; possibly via autoubiquitination. Ubiquitinated; this modification is inhibited in response to cellular stress, such as ultraviolet light (UV) radiation or heat shock. As to expression, widely expressed at low level. Expressed at higher level in spinal cord, ovary, whole brain, and all specific brain regions examined.

It localises to the cytoplasm. Its subcellular location is the cytoskeleton. The protein localises to the microtubule organizing center. It is found in the centrosome. The protein resides in the centriolar satellite. It localises to the cell membrane. It carries out the reaction S-ubiquitinyl-[E2 ubiquitin-conjugating enzyme]-L-cysteine + [acceptor protein]-L-lysine = [E2 ubiquitin-conjugating enzyme]-L-cysteine + N(6)-ubiquitinyl-[acceptor protein]-L-lysine.. It functions in the pathway protein modification; protein ubiquitination. In terms of biological role, E3 ubiquitin-protein ligase that mediates ubiquitination of Delta receptors, which act as ligands of Notch proteins. Positively regulates the Delta-mediated Notch signaling by ubiquitinating the intracellular domain of Delta, leading to endocytosis of Delta receptors. Probably mediates ubiquitination and subsequent proteasomal degradation of DAPK1, thereby antagonizing anti-apoptotic effects of DAPK1 to promote TNF-induced apoptosis. Involved in ubiquitination of centriolar satellite CEP131, CEP290 and PCM1 proteins and hence inhibits primary cilium formation in proliferating cells. Mediates 'Lys-63'-linked polyubiquitination of TBK1, which probably participates in kinase activation. Its function is as follows. (Microbial infection) During adenovirus infection, mediates ubiquitination of Core-capsid bridging protein. This allows viral genome delivery into nucleus for infection. The protein is E3 ubiquitin-protein ligase MIB1 (MIB1) of Homo sapiens (Human).